A 392-amino-acid chain; its full sequence is Chorismate synthase (392 aa).

NADP(+)-binding residues include arginine 40 and arginine 46. Residues 135–137 (RAS), 256–257 (QA), glycine 300, 315–319 (KPIST), and arginine 341 contribute to the FMN site.

It belongs to the chorismate synthase family. In terms of assembly, homotetramer. FMNH2 is required as a cofactor.

The catalysed reaction is 5-O-(1-carboxyvinyl)-3-phosphoshikimate = chorismate + phosphate. It participates in metabolic intermediate biosynthesis; chorismate biosynthesis; chorismate from D-erythrose 4-phosphate and phosphoenolpyruvate: step 7/7. Catalyzes the anti-1,4-elimination of the C-3 phosphate and the C-6 proR hydrogen from 5-enolpyruvylshikimate-3-phosphate (EPSP) to yield chorismate, which is the branch point compound that serves as the starting substrate for the three terminal pathways of aromatic amino acid biosynthesis. This reaction introduces a second double bond into the aromatic ring system. The sequence is that of Chorismate synthase from Acidothermus cellulolyticus (strain ATCC 43068 / DSM 8971 / 11B).